The sequence spans 342 residues: Nucleoid-associated protein Sbal223_1817 (342 aa).

This sequence belongs to the YejK family.

The protein resides in the cytoplasm. The protein localises to the nucleoid. This chain is Nucleoid-associated protein Sbal223_1817, found in Shewanella baltica (strain OS223).